The sequence spans 238 residues: Ribosomal RNA small subunit methyltransferase G (238 aa).

S-adenosyl-L-methionine contacts are provided by residues glycine 77, phenylalanine 82, 128–129, and arginine 147; that span reads AE. The disordered stretch occupies residues 219-238; the sequence is KKTPARYPRKPGTPNKQPIQ.

Belongs to the methyltransferase superfamily. RNA methyltransferase RsmG family.

It is found in the cytoplasm. Specifically methylates the N7 position of guanine in position 535 of 16S rRNA. This is Ribosomal RNA small subunit methyltransferase G from Geobacillus thermodenitrificans (strain NG80-2).